The following is a 291-amino-acid chain: AA14 family lytic polysaccharide monooxygenase (291 aa).

The N-terminal stretch at 1-17 (MLTTAILFTSLAGSAYA) is a signal peptide. The N-linked (GlcNAc...) asparagine glycan is linked to Asn141. 3 disulfides stabilise this stretch: Cys192–Cys197, Cys199–Cys220, and Cys240–Cys247.

The protein belongs to the polysaccharide monooxygenase AA14 family. Requires Cu(2+) as cofactor.

Its subcellular location is the secreted. In terms of biological role, lytic polysaccharide monooxygenase (LPMO) that is active against heteroxylan, xyloglucan and cellulose in beta-cellulose and released native oligosaccharides and corresponding C1- and/or C4-oxidized products. May act mainly on heteroxylan with numerous arabinosyl substituents between cellulose fibers rather than on recalcitrant xylan tightly associated with cellulose. Catalysis by LPMOs requires the reduction of the active-site copper from Cu(II) to Cu(I) by a reducing agent and H(2)O(2) or O(2) as a cosubstrate. Shows a branched chain preference, and has synergistic effects with the Penicillium parvum debranching enzyme ABF62C in an enzyme- and ascorbic acid-dependent manner. Also has synergistic effects with the Penicillium parvum GH10 endoxylanase XYN1, and the degree of synergy was greater with step-by-step addition than with simultaneous addition. This is AA14 family lytic polysaccharide monooxygenase from Sordaria brevicollis.